A 312-amino-acid polypeptide reads, in one-letter code: Homoserine kinase (312 aa).

Residue 91 to 101 coordinates ATP; the sequence is PVASGLGSSAC.

The protein belongs to the GHMP kinase family. Homoserine kinase subfamily.

It localises to the cytoplasm. The catalysed reaction is L-homoserine + ATP = O-phospho-L-homoserine + ADP + H(+). It functions in the pathway amino-acid biosynthesis; L-threonine biosynthesis; L-threonine from L-aspartate: step 4/5. Catalyzes the ATP-dependent phosphorylation of L-homoserine to L-homoserine phosphate. This Blochmanniella pennsylvanica (strain BPEN) protein is Homoserine kinase.